A 623-amino-acid chain; its full sequence is Chaperone protein DnaK (623 aa).

The residue at position 175 (T175) is a Phosphothreonine; by autocatalysis. A disordered region spans residues 580-623 (PEGAQGAGFDPNNMGGANAGNASAENDKKDDNVVDADYKVEDDK). A compositionally biased stretch (low complexity) spans 591-603 (NNMGGANAGNASA). Positions 604–623 (ENDKKDDNVVDADYKVEDDK) are enriched in basic and acidic residues.

Belongs to the heat shock protein 70 family.

Its function is as follows. Acts as a chaperone. The protein is Chaperone protein DnaK of Clostridium botulinum (strain Okra / Type B1).